The sequence spans 523 residues: Ribonuclease Y (523 aa).

Residues leucine 7–tyrosine 24 form a helical membrane-spanning segment. The region spanning leucine 213–aspartate 279 is the KH domain. Residues alanine 339–alanine 432 form the HD domain.

The protein belongs to the RNase Y family.

It localises to the cell membrane. In terms of biological role, endoribonuclease that initiates mRNA decay. This chain is Ribonuclease Y, found in Wolinella succinogenes (strain ATCC 29543 / DSM 1740 / CCUG 13145 / JCM 31913 / LMG 7466 / NCTC 11488 / FDC 602W) (Vibrio succinogenes).